We begin with the raw amino-acid sequence, 443 residues long: ATP-dependent protease ATPase subunit HslU (443 aa).

Residues Ile-18, 60–65, Asp-256, Glu-321, and Arg-393 each bind ATP; that span reads GVGKTE.

This sequence belongs to the ClpX chaperone family. HslU subfamily. In terms of assembly, a double ring-shaped homohexamer of HslV is capped on each side by a ring-shaped HslU homohexamer. The assembly of the HslU/HslV complex is dependent on binding of ATP.

It localises to the cytoplasm. ATPase subunit of a proteasome-like degradation complex; this subunit has chaperone activity. The binding of ATP and its subsequent hydrolysis by HslU are essential for unfolding of protein substrates subsequently hydrolyzed by HslV. HslU recognizes the N-terminal part of its protein substrates and unfolds these before they are guided to HslV for hydrolysis. The polypeptide is ATP-dependent protease ATPase subunit HslU (Wigglesworthia glossinidia brevipalpis).